We begin with the raw amino-acid sequence, 308 residues long: MGGDHGHSHGDEGGSFYVHLIAGAAAGFAEHCGMYPIDTIKTHIQAIKPGAMQTSSLQITKHIIQQHGITGLFRGLTAVAAGAAPSHAVHFSIYELLKFKFIGSDEDHHPIKVGIAGAIATMTSEAVASPMDVVKQRLQLQITDYKGLTDCTKRIWVKEGIRGFYSGYTTTLVMNVPYNIVYFASYESLKKIIQPWFNNKNPEERSYQLIDHLVAGGGAGMLAAAFTNPFDVVKTRLQTQSDFIASSTINSAKSIKRYGGMMDAMKTIWIEEGMDGYLRGMKPRMVFHSMSSAIVWSVYEYFKFILGE.

The next 6 helical transmembrane spans lie at 13–29 (GGSF…AGFA), 69–89 (ITGL…SHAV), 111–131 (IKVG…ASPM), 168–184 (YTTT…VYFA), 213–233 (LVAG…FDVV), and 285–302 (MVFH…YEYF). 3 Solcar repeats span residues 14-100 (GSFY…LKFK), 108-192 (HHPI…LKKI), and 207-305 (YQLI…FKFI).

This sequence belongs to the mitochondrial carrier (TC 2.A.29) family.

The protein resides in the mitochondrion inner membrane. Mitochondrial solute carriers shuttle metabolites, nucleotides, and cofactors through the mitochondrial inner membrane. Mitochondrial iron transporter that mediates iron uptake. Probably required for heme synthesis of hemoproteins and Fe-S cluster assembly. The polypeptide is Mitoferrin (mcfF) (Dictyostelium discoideum (Social amoeba)).